The following is a 197-amino-acid chain: Probable GTP-binding protein EngB (197 aa).

Residues 22–195 (ELPEVALAGR…WKAIYALITE (174 aa)) form the EngB-type G domain. Residues 30 to 37 (GRSNVGKS), 57 to 61 (GKTQT), 75 to 78 (DVPG), 142 to 145 (TKLD), and 174 to 176 (FSA) each bind GTP. Mg(2+)-binding residues include S37 and T59.

The protein belongs to the TRAFAC class TrmE-Era-EngA-EngB-Septin-like GTPase superfamily. EngB GTPase family. It depends on Mg(2+) as a cofactor.

In terms of biological role, necessary for normal cell division and for the maintenance of normal septation. The sequence is that of Probable GTP-binding protein EngB from Exiguobacterium sp. (strain ATCC BAA-1283 / AT1b).